The following is a 737-amino-acid chain: Alpha-adducin (737 aa).

Position 1 is an N-acetylmethionine (methionine 1). A disordered region spans residues 1-21 (MNGDSRAAVVTSPPPTTAPHK). Phosphoserine is present on serine 12. Residue serine 59 is modified to Phosphoserine; by PKA. Serine 64 bears the Phosphoserine mark. A Phosphothreonine modification is found at threonine 331. Phosphoserine occurs at positions 334, 353, 355, 358, and 366. At serine 408 the chain carries Phosphoserine; by PKA. Disordered regions lie at residues 421–486 (FASD…SAVP) and 576–737 (RREV…KSDS). Serine 427 bears the Phosphoserine mark. Threonine 429 is modified (phosphothreonine). At serine 431 the chain carries Phosphoserine. Serine 436 carries the phosphoserine; by PKA modification. At threonine 445 the chain carries Phosphothreonine; by ROCK2. Phosphoserine occurs at positions 464 and 465. At threonine 480 the chain carries Phosphothreonine; by ROCK2. Residue serine 481 is modified to Phosphoserine; by PKA. The span at 576–601 (RREVERKQKGSEENLDEAREQKEKSP) shows a compositional bias: basic and acidic residues. Phosphoserine is present on residues serine 586, serine 600, and serine 613. Residues 602–614 (PDQPAVPHPPPST) show a composition bias toward pro residues. Phosphothreonine is present on threonine 614. Residues serine 678, serine 707, serine 710, and serine 714 each carry the phosphoserine modification. The segment covering 687–714 (PVAEEAAPSAVEEGAAADPGSDGSPGKS) has biased composition (low complexity). The segment covering 715–737 (PSKKKKKFRTPSFLKKSKKKSDS) has biased composition (basic residues). Serine 716 carries the post-translational modification Phosphoserine; by PKC. Residues 717–734 (KKKKKFRTPSFLKKSKKK) form an interaction with calmodulin region. Residue serine 726 is modified to Phosphoserine; by PKA and PKC.

It belongs to the aldolase class II family. Adducin subfamily. In terms of assembly, heterodimer of an alpha and a beta subunit or an alpha and a gamma subunit. As to expression, expressed in all tissues. Found in much higher levels in reticulocytes than the beta subunit.

The protein localises to the cytoplasm. Its subcellular location is the cytoskeleton. It localises to the cell membrane. Its function is as follows. Membrane-cytoskeleton-associated protein that promotes the assembly of the spectrin-actin network. Binds to calmodulin. The polypeptide is Alpha-adducin (ADD1) (Homo sapiens (Human)).